A 1396-amino-acid chain; its full sequence is DNA-directed RNA polymerase subunit beta' (1396 aa).

Cys72, Cys74, Cys87, and Cys90 together coordinate Zn(2+). Residues Asp463, Asp465, and Asp467 each coordinate Mg(2+). 4 residues coordinate Zn(2+): Cys814, Cys889, Cys896, and Cys899.

This sequence belongs to the RNA polymerase beta' chain family. As to quaternary structure, the RNAP catalytic core consists of 2 alpha, 1 beta, 1 beta' and 1 omega subunit. When a sigma factor is associated with the core the holoenzyme is formed, which can initiate transcription. Mg(2+) is required as a cofactor. It depends on Zn(2+) as a cofactor.

It catalyses the reaction RNA(n) + a ribonucleoside 5'-triphosphate = RNA(n+1) + diphosphate. In terms of biological role, DNA-dependent RNA polymerase catalyzes the transcription of DNA into RNA using the four ribonucleoside triphosphates as substrates. This chain is DNA-directed RNA polymerase subunit beta', found in Chlamydia trachomatis serovar L2 (strain ATCC VR-902B / DSM 19102 / 434/Bu).